A 122-amino-acid chain; its full sequence is Small ribosomal subunit protein uS12c (122 aa).

This sequence belongs to the universal ribosomal protein uS12 family. In terms of assembly, part of the 30S ribosomal subunit.

The protein resides in the plastid. The protein localises to the chloroplast. In terms of biological role, with S4 and S5 plays an important role in translational accuracy. Located at the interface of the 30S and 50S subunits. The chain is Small ribosomal subunit protein uS12c (rps12) from Chloranthus spicatus (Chulantree).